The chain runs to 190 residues: Imidazoleglycerol-phosphate dehydratase (190 aa).

This sequence belongs to the imidazoleglycerol-phosphate dehydratase family.

The protein resides in the cytoplasm. It catalyses the reaction D-erythro-1-(imidazol-4-yl)glycerol 3-phosphate = 3-(imidazol-4-yl)-2-oxopropyl phosphate + H2O. It participates in amino-acid biosynthesis; L-histidine biosynthesis; L-histidine from 5-phospho-alpha-D-ribose 1-diphosphate: step 6/9. In Nitratiruptor sp. (strain SB155-2), this protein is Imidazoleglycerol-phosphate dehydratase.